The primary structure comprises 183 residues: Dual-action ribosomal maturation protein DarP (183 aa).

The protein belongs to the DarP family.

Its subcellular location is the cytoplasm. Its function is as follows. Member of a network of 50S ribosomal subunit biogenesis factors which assembles along the 30S-50S interface, preventing incorrect 23S rRNA structures from forming. Promotes peptidyl transferase center (PTC) maturation. This is Dual-action ribosomal maturation protein DarP from Salmonella enteritidis PT4 (strain P125109).